The chain runs to 89 residues: Small ribosomal subunit protein uS15 (89 aa).

Belongs to the universal ribosomal protein uS15 family. In terms of assembly, part of the 30S ribosomal subunit. Forms a bridge to the 50S subunit in the 70S ribosome, contacting the 23S rRNA.

One of the primary rRNA binding proteins, it binds directly to 16S rRNA where it helps nucleate assembly of the platform of the 30S subunit by binding and bridging several RNA helices of the 16S rRNA. In terms of biological role, forms an intersubunit bridge (bridge B4) with the 23S rRNA of the 50S subunit in the ribosome. The chain is Small ribosomal subunit protein uS15 from Parabacteroides distasonis (strain ATCC 8503 / DSM 20701 / CIP 104284 / JCM 5825 / NCTC 11152).